We begin with the raw amino-acid sequence, 132 residues long: Fluoride-specific ion channel FluC (132 aa).

4 helical membrane passes run 5–25 (LVAI…LGMW), 36–56 (GTLA…ALFA), 68–88 (FVVT…AEMF), and 103–123 (IAVH…TFGA). Na(+) contacts are provided by G75 and T78.

It belongs to the fluoride channel Fluc/FEX (TC 1.A.43) family.

It localises to the cell inner membrane. The catalysed reaction is fluoride(in) = fluoride(out). With respect to regulation, na(+) is not transported, but it plays an essential structural role and its presence is essential for fluoride channel function. Functionally, fluoride-specific ion channel. Important for reducing fluoride concentration in the cell, thus reducing its toxicity. This chain is Fluoride-specific ion channel FluC, found in Chromohalobacter salexigens (strain ATCC BAA-138 / DSM 3043 / CIP 106854 / NCIMB 13768 / 1H11).